Reading from the N-terminus, the 149-residue chain is Calmodulin-2 (149 aa).

An N-acetylalanine modification is found at Ala2. 4 EF-hand domains span residues 8 to 43, 44 to 79, 81 to 116, and 117 to 149; these read EQIA…LGQN, PTEA…KMKD, DSEE…LGEK, and LTDE…MMAK. 14 residues coordinate Ca(2+): Asp21, Asp23, Asp25, Cys27, Glu32, Asp57, Asp59, Asn61, Thr63, Glu68, Asp94, Asp96, Asn98, and Glu105. Lys116 is subject to N6,N6,N6-trimethyllysine. Ca(2+) contacts are provided by Asp130, Asp132, Asp134, Gln136, and Glu141.

The protein belongs to the calmodulin family.

Functionally, calmodulin mediates the control of a large number of enzymes, ion channels and other proteins by Ca(2+). Among the enzymes to be stimulated by the calmodulin-Ca(2+) complex are a number of protein kinases and phosphatases. The polypeptide is Calmodulin-2 (CAM2) (Oryza sativa subsp. indica (Rice)).